Here is a 273-residue protein sequence, read N- to C-terminus: Secretory carrier-associated membrane protein 6 (273 aa).

A disordered region spans residues Met1–Glu69. Residues Met1 to Ala131 are Cytoplasmic-facing. The segment covering Asn20–Ser30 has biased composition (gly residues). The stretch at Arg68 to Ala94 forms a coiled coil. 4 consecutive transmembrane segments (helical) span residues Ser132–Ile152, Leu159–Tyr179, Phe194–Ala214, and Ile239–Ile259. Residues Gly260–Lys273 lie on the Cytoplasmic side of the membrane.

This sequence belongs to the SCAMP family.

It localises to the cell membrane. The protein resides in the cytoplasmic vesicle. Its subcellular location is the secretory vesicle membrane. Its function is as follows. Probably involved in membrane trafficking. In Oryza sativa subsp. japonica (Rice), this protein is Secretory carrier-associated membrane protein 6 (SCAMP6).